We begin with the raw amino-acid sequence, 191 residues long: Photosystem I assembly protein Ycf4 (191 aa).

The next 2 membrane-spanning stretches (helical) occupy residues 34 to 54 and 68 to 88; these read VASMLSIGGVGFLLASFSSYF and IFVPQGLVMGLYGLAAFLLAI.

It belongs to the Ycf4 family.

Its subcellular location is the cellular thylakoid membrane. Functionally, seems to be required for the assembly of the photosystem I complex. The chain is Photosystem I assembly protein Ycf4 from Prochlorococcus marinus (strain NATL1A).